The primary structure comprises 164 residues: MLTYQVKQGDTLNSIAADFRISTAALLQANPSLQAGLTAGQSIVIPGLPDPYTIPYHIAVSIGAKTLTLSLNNRVMKTYPIAVGKILTQTPTGEFYIINRQRNPGGPFGAYWLSLSKQHYGIHGTNNPASIGKAVSKGCIRMHNKDVIELASIVPNGTRVTINR.

Residues 2–45 (LTYQVKQGDTLNSIAADFRISTAALLQANPSLQAGLTAGQSIVI) enclose the LysM domain. Residues 56–163 (YHIAVSIGAK…VPNGTRVTIN (108 aa)) enclose the L,D-TPase catalytic domain. His123 functions as the Proton donor/acceptor in the catalytic mechanism. Residue Cys139 is the Nucleophile of the active site.

The protein belongs to the YkuD family. In terms of assembly, monomer.

The protein localises to the spore wall. The protein operates within cell wall biogenesis; peptidoglycan biosynthesis. In terms of biological role, probable enzyme that may play an important role in cell wall biology. This chain is Putative L,D-transpeptidase YkuD (ykuD), found in Bacillus subtilis (strain 168).